The sequence spans 616 residues: Chaperone protein HscA (616 aa).

It belongs to the heat shock protein 70 family.

Chaperone involved in the maturation of iron-sulfur cluster-containing proteins. Has a low intrinsic ATPase activity which is markedly stimulated by HscB. Involved in the maturation of IscU. The protein is Chaperone protein HscA of Salmonella paratyphi B (strain ATCC BAA-1250 / SPB7).